A 74-amino-acid chain; its full sequence is Brevinin-2Tb (74 aa).

Residues Met-1–Cys-22 form the signal peptide. Positions Gln-23–Lys-40 are excised as a propeptide. Residues Cys-68 and Cys-74 are joined by a disulfide bond.

This sequence belongs to the frog skin active peptide (FSAP) family. Brevinin subfamily. In terms of tissue distribution, expressed by the skin glands.

The protein resides in the secreted. Functionally, antimicrobial peptide. The polypeptide is Brevinin-2Tb (Rana temporaria (European common frog)).